The sequence spans 501 residues: HMG-box protein STE11 (501 aa).

A compositionally biased stretch (polar residues) spans 142-153 (PVNMVGSLSGSP). Disordered regions lie at residues 142-205 (PVNM…KRPL) and 246-293 (YAEM…SLEQ). The segment covering 192-204 (SRSGSSSSGIKRP) has biased composition (low complexity). Residues 201–265 (IKRPLNSFML…RHAKEYPDYK (65 aa)) constitute a DNA-binding region (HMG box). Residues 246-263 (YAEMAQRERERHAKEYPD) are compositionally biased toward basic and acidic residues.

Phosphorylated by MAPK2.

It localises to the nucleus. The protein is HMG-box protein STE11 of Pneumocystis carinii.